A 564-amino-acid polypeptide reads, in one-letter code: Eukaryotic translation initiation factor 3 subunit L (564 aa).

An N-acetylserine modification is found at serine 2. Serine 21 is modified (phosphoserine). Residues 331–537 form the PCI domain; the sequence is DAIRVFANIL…IHIADTKVAR (207 aa). An N6-acetyllysine mark is found at lysine 465 and lysine 549.

In terms of assembly, component of the eukaryotic translation initiation factor 3 (eIF-3) complex, which is composed of 13 subunits: EIF3A, EIF3B, EIF3C, EIF3D, EIF3E, EIF3F, EIF3G, EIF3H, EIF3I, EIF3J, EIF3K, EIF3L and EIF3M. The eIF-3 complex appears to include 3 stable modules: module A is composed of EIF3A, EIF3B, EIF3G and EIF3I; module B is composed of EIF3F, EIF3H, and EIF3M; and module C is composed of EIF3C, EIF3D, EIF3E, EIF3K and EIF3L. EIF3C of module C binds EIF3B of module A and EIF3H of module B, thereby linking the three modules. EIF3J is a labile subunit that binds to the eIF-3 complex via EIF3B. The eIF-3 complex interacts with RPS6KB1 under conditions of nutrient depletion. Mitogenic stimulation leads to binding and activation of a complex composed of MTOR and RPTOR, leading to phosphorylation and release of RPS6KB1 and binding of EIF4B to eIF-3. Interacts with RRN3.

The protein localises to the cytoplasm. Component of the eukaryotic translation initiation factor 3 (eIF-3) complex, which is required for several steps in the initiation of protein synthesis. The eIF-3 complex associates with the 40S ribosome and facilitates the recruitment of eIF-1, eIF-1A, eIF-2:GTP:methionyl-tRNAi and eIF-5 to form the 43S pre-initiation complex (43S PIC). The eIF-3 complex stimulates mRNA recruitment to the 43S PIC and scanning of the mRNA for AUG recognition. The eIF-3 complex is also required for disassembly and recycling of post-termination ribosomal complexes and subsequently prevents premature joining of the 40S and 60S ribosomal subunits prior to initiation. The eIF-3 complex specifically targets and initiates translation of a subset of mRNAs involved in cell proliferation, including cell cycling, differentiation and apoptosis, and uses different modes of RNA stem-loop binding to exert either translational activation or repression. In terms of biological role, (Microbial infection) In case of FCV infection, plays a role in the ribosomal termination-reinitiation event leading to the translation of VP2. In Homo sapiens (Human), this protein is Eukaryotic translation initiation factor 3 subunit L.